A 168-amino-acid chain; its full sequence is Small ribosomal subunit protein uS5 (168 aa).

An S5 DRBM domain is found at leucine 13–valine 76.

It belongs to the universal ribosomal protein uS5 family. As to quaternary structure, part of the 30S ribosomal subunit. Contacts proteins S4 and S8.

Its function is as follows. With S4 and S12 plays an important role in translational accuracy. Located at the back of the 30S subunit body where it stabilizes the conformation of the head with respect to the body. The chain is Small ribosomal subunit protein uS5 from Shewanella amazonensis (strain ATCC BAA-1098 / SB2B).